The following is a 94-amino-acid chain: MARVTVQDAVDKIGNRFDLIQIASRRARQLQTGGKDPLVPEENDKYTVIALREIEEGLITKDILDARERQELQEQEAAELAAVSAIAGDHHHHR.

This sequence belongs to the RNA polymerase subunit omega family. As to quaternary structure, the RNAP catalytic core consists of 2 alpha, 1 beta, 1 beta' and 1 omega subunit. When a sigma factor is associated with the core the holoenzyme is formed, which can initiate transcription.

It carries out the reaction RNA(n) + a ribonucleoside 5'-triphosphate = RNA(n+1) + diphosphate. Its function is as follows. Promotes RNA polymerase assembly. Latches the N- and C-terminal regions of the beta' subunit thereby facilitating its interaction with the beta and alpha subunits. This chain is DNA-directed RNA polymerase subunit omega, found in Photobacterium profundum (strain SS9).